The sequence spans 227 residues: Phosphoribosylformylglycinamidine synthase subunit PurQ (227 aa).

Residues Phe-3–Ser-227 enclose the Glutamine amidotransferase type-1 domain. The active-site Nucleophile is Cys-86. Catalysis depends on residues His-194 and Glu-196.

Part of the FGAM synthase complex composed of 1 PurL, 1 PurQ and 2 PurS subunits.

It localises to the cytoplasm. It catalyses the reaction N(2)-formyl-N(1)-(5-phospho-beta-D-ribosyl)glycinamide + L-glutamine + ATP + H2O = 2-formamido-N(1)-(5-O-phospho-beta-D-ribosyl)acetamidine + L-glutamate + ADP + phosphate + H(+). The enzyme catalyses L-glutamine + H2O = L-glutamate + NH4(+). The protein operates within purine metabolism; IMP biosynthesis via de novo pathway; 5-amino-1-(5-phospho-D-ribosyl)imidazole from N(2)-formyl-N(1)-(5-phospho-D-ribosyl)glycinamide: step 1/2. Part of the phosphoribosylformylglycinamidine synthase complex involved in the purines biosynthetic pathway. Catalyzes the ATP-dependent conversion of formylglycinamide ribonucleotide (FGAR) and glutamine to yield formylglycinamidine ribonucleotide (FGAM) and glutamate. The FGAM synthase complex is composed of three subunits. PurQ produces an ammonia molecule by converting glutamine to glutamate. PurL transfers the ammonia molecule to FGAR to form FGAM in an ATP-dependent manner. PurS interacts with PurQ and PurL and is thought to assist in the transfer of the ammonia molecule from PurQ to PurL. The sequence is that of Phosphoribosylformylglycinamidine synthase subunit PurQ from Shouchella clausii (strain KSM-K16) (Alkalihalobacillus clausii).